A 629-amino-acid polypeptide reads, in one-letter code: tRNA uridine 5-carboxymethylaminomethyl modification enzyme MnmG (629 aa).

FAD is bound at residue G14–G19. An NAD(+)-binding site is contributed by G274–F288.

The protein belongs to the MnmG family. As to quaternary structure, homodimer. Heterotetramer of two MnmE and two MnmG subunits. The cofactor is FAD.

The protein localises to the cytoplasm. Functionally, NAD-binding protein involved in the addition of a carboxymethylaminomethyl (cmnm) group at the wobble position (U34) of certain tRNAs, forming tRNA-cmnm(5)s(2)U34. The sequence is that of tRNA uridine 5-carboxymethylaminomethyl modification enzyme MnmG from Xylella fastidiosa (strain Temecula1 / ATCC 700964).